The sequence spans 552 residues: FACT complex subunit POB3 (552 aa).

Residues Lys190 to Gly205 are compositionally biased toward basic and acidic residues. Disordered stretches follow at residues Lys190–Glu209 and Gln484–Glu552. Residues Asp490–Ser529 are compositionally biased toward acidic residues. Basic and acidic residues predominate over residues Asp541–Glu552.

It belongs to the SSRP1 family. As to quaternary structure, forms a stable heterodimer with SPT16. The SPT16-POB3 dimer weakly associates with multiple molecules of NHP6 (NHP6A or NHP6B) to form the FACT (yFACT or SNP) complex. The FACT complex interacts with the CK2 (casein kinase II) complex subunits CKA1, CKA2, CKB1 and CKB2 and the components of the transcription machinery CHD1, CTR9, PAF1 and CDC73. The FACT complex interacts with the PAF1 complex. SPT16 interacts with SAS3 and POL1. Interacts directly with RFA1.

Its subcellular location is the nucleus. It is found in the chromosome. Component of the FACT complex, a general chromatin factor that acts to reorganize nucleosomes. The FACT complex is involved in multiple processes that require DNA as a template such as mRNA elongation, DNA replication and DNA repair. During transcription elongation the FACT complex acts as a histone chaperone that both destabilizes and restores nucleosomal structure. It facilitates the passage of RNA polymerase II and transcription by promoting the dissociation of one histone H2A-H2B dimer from the nucleosome, then subsequently promotes the reestablishment of the nucleosome following the passage of RNA polymerase II. Transcription elongation is promoted by the repression of transcription initiation from cryptic sites. Also acts in establishing transcription initiation complexes and promotes SPT15/TBP-binding to a TATA box. Together with replication factor-A protein (RPA), FACT may play a role in nucleosome deposition during DNA replication. This Saccharomyces cerevisiae (strain ATCC 204508 / S288c) (Baker's yeast) protein is FACT complex subunit POB3 (POB3).